The primary structure comprises 389 residues: tRNA-specific 2-thiouridylase MnmA (389 aa).

ATP contacts are provided by residues 33–40 (GLSGGVDS) and leucine 59. Catalysis depends on cysteine 120, which acts as the Nucleophile. The cysteines at positions 120 and 219 are disulfide-linked. Glycine 145 contributes to the ATP binding site. The interval 169–171 (KDQ) is interaction with tRNA. Cysteine 219 acts as the Cysteine persulfide intermediate in catalysis. Residues 326-327 (RY) are interaction with tRNA.

This sequence belongs to the MnmA/TRMU family.

It localises to the cytoplasm. It catalyses the reaction S-sulfanyl-L-cysteinyl-[protein] + uridine(34) in tRNA + AH2 + ATP = 2-thiouridine(34) in tRNA + L-cysteinyl-[protein] + A + AMP + diphosphate + H(+). Its function is as follows. Catalyzes the 2-thiolation of uridine at the wobble position (U34) of tRNA, leading to the formation of s(2)U34. The protein is tRNA-specific 2-thiouridylase MnmA of Synechococcus sp. (strain WH7803).